A 102-amino-acid polypeptide reads, in one-letter code: Small ribosomal subunit protein uS10 (102 aa).

The protein belongs to the universal ribosomal protein uS10 family. In terms of assembly, part of the 30S ribosomal subunit.

In terms of biological role, involved in the binding of tRNA to the ribosomes. The protein is Small ribosomal subunit protein uS10 of Kosmotoga olearia (strain ATCC BAA-1733 / DSM 21960 / TBF 19.5.1).